Reading from the N-terminus, the 145-residue chain is uncharacterized protein (145 aa).

It belongs to the methyltransferase superfamily.

Probable methyltransferase. This is an uncharacterized protein from Schizosaccharomyces pombe (strain 972 / ATCC 24843) (Fission yeast).